Consider the following 137-residue polypeptide: Large ribosomal subunit protein mL41 (137 aa).

Residues Met-1–Arg-13 constitute a mitochondrion transit peptide.

The protein belongs to the mitochondrion-specific ribosomal protein mL41 family. Component of the mitochondrial large ribosomal subunit (mt-LSU). Mature mammalian 55S mitochondrial ribosomes consist of a small (28S) and a large (39S) subunit. The 28S small subunit contains a 12S ribosomal RNA (12S mt-rRNA) and 30 different proteins. The 39S large subunit contains a 16S rRNA (16S mt-rRNA), a copy of mitochondrial valine transfer RNA (mt-tRNA(Val)), which plays an integral structural role, and 52 different proteins. Interacts with BCL2. As to expression, present in kidney, liver, thymus and testis, and at lower level in brain and spleen (at protein level).

It is found in the mitochondrion. Functionally, component of the mitochondrial ribosome large subunit. Also involved in apoptosis and cell cycle. Enhances p53/TP53 stability, thereby contributing to p53/TP53-induced apoptosis in response to growth-inhibitory condition. Enhances p53/TP53 translocation to the mitochondria. Has the ability to arrest the cell cycle at the G1 phase, possibly by stabilizing the CDKN1A and CDKN1B (p27Kip1) proteins. The sequence is that of Large ribosomal subunit protein mL41 (MRPL41) from Homo sapiens (Human).